A 331-amino-acid polypeptide reads, in one-letter code: UDP-N-acetylenolpyruvoylglucosamine reductase (331 aa).

The FAD-binding PCMH-type domain maps to 54 to 221; the sequence is RVGGAAELYV…TQATFQLQPG (168 aa). Arg200 is an active-site residue. The active-site Proton donor is Ser251. The active site involves Glu321.

It belongs to the MurB family. It depends on FAD as a cofactor.

The protein localises to the cytoplasm. It catalyses the reaction UDP-N-acetyl-alpha-D-muramate + NADP(+) = UDP-N-acetyl-3-O-(1-carboxyvinyl)-alpha-D-glucosamine + NADPH + H(+). Its pathway is cell wall biogenesis; peptidoglycan biosynthesis. Its function is as follows. Cell wall formation. In Nostoc sp. (strain PCC 7120 / SAG 25.82 / UTEX 2576), this protein is UDP-N-acetylenolpyruvoylglucosamine reductase.